Consider the following 327-residue polypeptide: tRNA uridine(34) hydroxylase (327 aa).

A Rhodanese domain is found at 123–217; that stretch reads SDPEVLLVDT…YLEEVKLEES (95 aa). The active-site Cysteine persulfide intermediate is C177.

The protein belongs to the TrhO family.

The catalysed reaction is uridine(34) in tRNA + AH2 + O2 = 5-hydroxyuridine(34) in tRNA + A + H2O. Its function is as follows. Catalyzes oxygen-dependent 5-hydroxyuridine (ho5U) modification at position 34 in tRNAs. The sequence is that of tRNA uridine(34) hydroxylase from Shewanella pealeana (strain ATCC 700345 / ANG-SQ1).